Reading from the N-terminus, the 333-residue chain is B3 domain-containing transcription factor NGA4 (333 aa).

The segment at residues F36–R145 is a DNA-binding region (TF-B3). Residues V268–L333 are disordered. A compositionally biased stretch (basic and acidic residues) spans E323–L333.

The protein localises to the nucleus. In terms of biological role, regulates lateral organ growth. Functionally redundant with NGA1, NGA2 and NGA3. This Arabidopsis thaliana (Mouse-ear cress) protein is B3 domain-containing transcription factor NGA4 (NGA4).